A 435-amino-acid polypeptide reads, in one-letter code: Cytochrome c biogenesis protein CcsB (435 aa).

The next 3 helical transmembrane spans lie at 14–34, 72–92, and 162–182; these read LRLA…GTIL, SVWF…CSWR, and VGPL…AWGA.

Belongs to the Ccs1/CcsB family. As to quaternary structure, may interact with CcsA.

The protein localises to the cellular thylakoid membrane. Required during biogenesis of c-type cytochromes (cytochrome c6 and cytochrome f) at the step of heme attachment. This Synechococcus sp. (strain CC9311) protein is Cytochrome c biogenesis protein CcsB.